The primary structure comprises 335 residues: Fructose-1,6-bisphosphatase class 1 (335 aa).

Mg(2+) contacts are provided by Glu-92, Asp-114, Leu-116, and Asp-117. Substrate-binding positions include 117–120, Asn-209, and Lys-275; that span reads DGSS. Glu-281 contacts Mg(2+).

Belongs to the FBPase class 1 family. As to quaternary structure, homotetramer. The cofactor is Mg(2+).

The protein resides in the cytoplasm. The enzyme catalyses beta-D-fructose 1,6-bisphosphate + H2O = beta-D-fructose 6-phosphate + phosphate. It functions in the pathway carbohydrate biosynthesis; gluconeogenesis. This is Fructose-1,6-bisphosphatase class 1 from Delftia acidovorans (strain DSM 14801 / SPH-1).